A 438-amino-acid polypeptide reads, in one-letter code: MNMFVDQIKIEVHAGKGGDGMVAFRREKYVPNGGPAGGDGGRGGSIILKVDEGLRTLMDFRYHRIFKAKNGGNGMSKQMTGPSAEDTIIAVPQGTTVRDLDTGKIIGDLVEKDQELVVAKGGRGGRGNIHFASAKNPAPEIAENGEPGEDHYLELELKMLADVGLIGFPSVGKSTLLSVVTGAKPKIAAYEFTTLTPNLGMVMLPDGRDFAMADMPGLIEGASKGIGLGLKFLRHIERTRVLLHLVDMSSEDPHQAIERYRQINKELADYDPELLKRPQIVVATKMDLPNSADNLAAFKADLAADKTLEKQPEIFPISAVTHQGVQQLMQLTADLLDKTPAFDSESHDKELVAEYRAAAPDKKDEADFTITKDEDGTWVLGGEKLIRLFKMTDLTHEESQLRFARQLRHMGVDDALRAKGVQDGDLVRIEKFVFEFIQ.

An Obg domain is found at 2-160 (NMFVDQIKIE…HYLELELKML (159 aa)). The region spanning 161–337 (ADVGLIGFPS…LMQLTADLLD (177 aa)) is the OBG-type G domain. GTP contacts are provided by residues 167–174 (GFPSVGKS), 192–196 (FTTLT), 214–217 (DMPG), 284–287 (TKMD), and 318–320 (SAV). Residues Ser-174 and Thr-194 each coordinate Mg(2+). The OCT domain occupies 360 to 438 (PDKKDEADFT…IEKFVFEFIQ (79 aa)).

It belongs to the TRAFAC class OBG-HflX-like GTPase superfamily. OBG GTPase family. Monomer. The cofactor is Mg(2+).

It is found in the cytoplasm. Functionally, an essential GTPase which binds GTP, GDP and possibly (p)ppGpp with moderate affinity, with high nucleotide exchange rates and a fairly low GTP hydrolysis rate. Plays a role in control of the cell cycle, stress response, ribosome biogenesis and in those bacteria that undergo differentiation, in morphogenesis control. In Limosilactobacillus reuteri (strain DSM 20016) (Lactobacillus reuteri), this protein is GTPase Obg.